Consider the following 682-residue polypeptide: Inactive protein-arginine deiminase type-6 (682 aa).

Residues Ser-2 and Ser-434 each carry the phosphoserine modification.

Belongs to the protein arginine deiminase family. In terms of assembly, homodimers. Associates with alpha-tubulin. In terms of processing, phosphorylation at Ser-2, possibly by RSK-type kinases, and Ser-434 creates binding sites for 14-3-3 proteins. As to expression, expressed at very high levels in oocytes. Weakly expressed in testis. Expressed in primordial, primary, secondary and Graafian follicles, and in immature oocytes, mature eggs and blastocyst (at protein level).

It localises to the cytoplasm. Its subcellular location is the nucleus. The protein localises to the cytoplasmic vesicle. It is found in the secretory vesicle. The protein resides in the cortical granule. In terms of biological role, structural constituent of cytoplasmic lattices, which plays a key role in early embryonic development. Cytoplasmic lattices consist in fibrous structures found in the cytoplasm of oocytes and preimplantation embryos. They are required to store maternal proteins critical for embryonic development, such as ribosomal proteins and proteins that control epigenetic reprogramming of the preimplantation embryo, and prevent their degradation or activation. In contrast to other members of the family, does not show protein-arginine deiminase activity due to its inability to bind Ca(2+). This is Inactive protein-arginine deiminase type-6 from Mus musculus (Mouse).